The primary structure comprises 378 residues: Carbamoyl phosphate synthase small chain (378 aa).

The segment at 1 to 189 (MTKPAILALA…DSHPEIPAGE (189 aa)) is CPSase. L-glutamine contacts are provided by Ser47, Gly241, and Gly243. In terms of domain architecture, Glutamine amidotransferase type-1 spans 193-378 (HVVAYDYGVK…RFISAMAERR (186 aa)). Catalysis depends on Cys269, which acts as the Nucleophile. The L-glutamine site is built by Leu270, Gln273, Asn311, Gly313, and Phe314. Active-site residues include His353 and Glu355.

Belongs to the CarA family. In terms of assembly, composed of two chains; the small (or glutamine) chain promotes the hydrolysis of glutamine to ammonia, which is used by the large (or ammonia) chain to synthesize carbamoyl phosphate. Tetramer of heterodimers (alpha,beta)4.

The enzyme catalyses hydrogencarbonate + L-glutamine + 2 ATP + H2O = carbamoyl phosphate + L-glutamate + 2 ADP + phosphate + 2 H(+). It carries out the reaction L-glutamine + H2O = L-glutamate + NH4(+). The protein operates within amino-acid biosynthesis; L-arginine biosynthesis; carbamoyl phosphate from bicarbonate: step 1/1. Its pathway is pyrimidine metabolism; UMP biosynthesis via de novo pathway; (S)-dihydroorotate from bicarbonate: step 1/3. In terms of biological role, small subunit of the glutamine-dependent carbamoyl phosphate synthetase (CPSase). CPSase catalyzes the formation of carbamoyl phosphate from the ammonia moiety of glutamine, carbonate, and phosphate donated by ATP, constituting the first step of 2 biosynthetic pathways, one leading to arginine and/or urea and the other to pyrimidine nucleotides. The small subunit (glutamine amidotransferase) binds and cleaves glutamine to supply the large subunit with the substrate ammonia. The protein is Carbamoyl phosphate synthase small chain of Pseudomonas aeruginosa (strain ATCC 15692 / DSM 22644 / CIP 104116 / JCM 14847 / LMG 12228 / 1C / PRS 101 / PAO1).